The sequence spans 134 residues: Protein PsiE homolog (134 aa).

The next 4 helical transmembrane spans lie at 14 to 34 (LQWI…IFLI), 56 to 76 (VESI…IKYF), 82 to 102 (FPLR…IIVS), and 106 to 126 (PMET…LYIS).

Belongs to the PsiE family.

The protein resides in the cell membrane. The chain is Protein PsiE homolog from Bacillus anthracis.